The chain runs to 610 residues: Glutamine--fructose-6-phosphate aminotransferase [isomerizing] (610 aa).

C2 acts as the Nucleophile; for GATase activity in catalysis. The Glutamine amidotransferase type-2 domain maps to 2–218 (CGIVGAVAQR…EGDVAEITRR (217 aa)). SIS domains are found at residues 286 to 426 (AAEI…QQGR) and 459 to 600 (LATD…VDQP). The active-site For Fru-6P isomerization activity is K605.

As to quaternary structure, homodimer.

The protein resides in the cytoplasm. It catalyses the reaction D-fructose 6-phosphate + L-glutamine = D-glucosamine 6-phosphate + L-glutamate. In terms of biological role, catalyzes the first step in hexosamine metabolism, converting fructose-6P into glucosamine-6P using glutamine as a nitrogen source. In Vibrio vulnificus (strain CMCP6), this protein is Glutamine--fructose-6-phosphate aminotransferase [isomerizing].